The sequence spans 66 residues: Toxin Boma6e (66 aa).

The 63-residue stretch at 2 to 64 (RDAYIAQNYN…VPLKVQGKCH (63 aa)) folds into the LCN-type CS-alpha/beta domain. 3 cysteine pairs are disulfide-bonded: Cys-12–Cys-63, Cys-22–Cys-46, and Cys-26–Cys-48.

This sequence belongs to the long (3 C-C) scorpion toxin superfamily. Only three disulfide bridges can be formed, because only seven cysteines are present. As to expression, expressed by the venom gland.

Its subcellular location is the secreted. Binds voltage-independently at site-3 of sodium channels (Nav) and inhibits the inactivation of the activated channels, thereby blocking neuronal transmission. In Buthus occitanus mardochei (Moroccan scorpion), this protein is Toxin Boma6e.